Reading from the N-terminus, the 310-residue chain is Porphobilinogen deaminase (310 aa).

Residue Cys-243 is modified to S-(dipyrrolylmethanemethyl)cysteine.

It belongs to the HMBS family. As to quaternary structure, monomer. The cofactor is dipyrromethane.

It catalyses the reaction 4 porphobilinogen + H2O = hydroxymethylbilane + 4 NH4(+). It functions in the pathway porphyrin-containing compound metabolism; protoporphyrin-IX biosynthesis; coproporphyrinogen-III from 5-aminolevulinate: step 2/4. Tetrapolymerization of the monopyrrole PBG into the hydroxymethylbilane pre-uroporphyrinogen in several discrete steps. This is Porphobilinogen deaminase from Methylobacillus flagellatus (strain ATCC 51484 / DSM 6875 / VKM B-1610 / KT).